Here is a 535-residue protein sequence, read N- to C-terminus: Importin subunit alpha-2 (535 aa).

The IBB domain maps to 1 to 58 (MSLRPNAKTEVRRNRYKVAVDAEEGRRRREDNMVEIRKSKREESLQKKRREGLQANQL). Basic and acidic residues predominate over residues 20 to 46 (VDAEEGRRRREDNMVEIRKSKREESLQ). Positions 20-67 (VDAEEGRRRREDNMVEIRKSKREESLQKKRREGLQANQLPQFAPSPVP) are disordered. 10 ARM repeats span residues 67-106 (PASS…KLLS), 110-150 (SPPI…NIAS), 153-192 (SENT…NVAG), 195-235 (PRCR…NFCR), 237-276 (KPQP…YLSD), 279-318 (NDKI…NIVT), 321-361 (DLQT…NITA), 364-403 (RDQI…NATS), 407-446 (PDQI…NILK), and 461-500 (NFYA…TYWL).

This sequence belongs to the importin alpha family. As to quaternary structure, forms a complex with the importin subunit beta-1 KPNB1. Interacts with A.tumefaciens VirD2 and VirE2. Binds to SWO1.

It localises to the nucleus envelope. In terms of biological role, binds to conventional NLS motifs and mediates nuclear protein import across the nuclear envelope. Involved in the maintenance of cell wall integrity under salt stress via interaction with SWO1. Acts as a cellular receptor for the nuclear import of the virD2 protein of Agrobacterium, but is not essential for Agrobacterium-mediated root transformation. The protein is Importin subunit alpha-2 of Arabidopsis thaliana (Mouse-ear cress).